Consider the following 61-residue polypeptide: uncharacterized protein (61 aa).

The first 28 residues, methionine 1 to alanine 28, serve as a signal peptide directing secretion.

This is an uncharacterized protein from Mycobacterium tuberculosis (strain ATCC 25618 / H37Rv).